Reading from the N-terminus, the 307-residue chain is Mitochondrial glycine transporter (307 aa).

Solcar repeat units follow at residues 8–87 (PRNS…MRSS), 115–199 (LTMY…SKQL), and 221–305 (TSTT…LVKR). Helical transmembrane passes span 14–39 (LIGGFFGGLTSAVALQPLDLLKTRIQ), 62–88 (GTLPSALRTSIGSALYLSCLNLMRSSL), 121–146 (LLTGAFARGLVGYITMPITVIKVRYE), 174–197 (GFGATCLRDAPYAGLYVLLYEKSK), 225–251 (VNTTSAVLSASLATTVTAPFDTIKTRM), and 280–298 (GLSMRLARKAFSAGIAWGI).

The protein belongs to the mitochondrial carrier (TC 2.A.29) family. SLC25A38 subfamily.

It is found in the mitochondrion. The protein localises to the mitochondrion inner membrane. The catalysed reaction is glycine(in) = glycine(out). In terms of biological role, mitochondrial glycine transporter that imports glycine into the mitochondrial matrix. Plays an important role in providing glycine for the first enzymatic step in heme biosynthesis, the condensation of glycine with succinyl-CoA to produce 5-aminolevulinate (ALA) in the mitochondrial matrix. In Saccharomyces cerevisiae (strain ATCC 204508 / S288c) (Baker's yeast), this protein is Mitochondrial glycine transporter.